We begin with the raw amino-acid sequence, 1321 residues long: Indole-3-acetaldehyde oxidase (1321 aa).

A 2Fe-2S ferredoxin-type domain is found at 1 to 90 (MSLVFAINGQ…HCNITTSEGL (90 aa)). [2Fe-2S] cluster contacts are provided by cysteine 42, cysteine 47, and cysteine 50. The 190-residue stretch at 215 to 404 (VDSGMYRWCS…LSIEIPFWHS (190 aa)) folds into the FAD-binding PCMH-type domain.

It belongs to the xanthine dehydrogenase family. Aldehyde oxidases (AO) are homodimers and heterodimers of AO subunits. AO-beta is a AAO1-AAO2 heterodimer; AO-gamma is a AAO2 homodimer. AAO2 also forms a dimer with AAO3. [2Fe-2S] cluster is required as a cofactor. FAD serves as cofactor. It depends on Mo-molybdopterin as a cofactor. Weakly expressed in roots, leaves and seedlings. In seedlings, mostly expressed in lower part of hypocotyls. Detectable in seeds and mature siliques at low levels.

It localises to the cytoplasm. It catalyses the reaction indole-3-acetaldehyde + O2 + H2O = (indol-3-yl)acetate + H2O2 + H(+). Strongly inhibited by iodoacetate, potassium cyanide (KCN), 2-mercaptoethanol, dithiothreitol (DTT), p-chloromercuribenzoate, menadione and estradiol. Weakly inhibited by 4'-(9-acridinylamino)methanesulfon-m-anisidine (mAMSA) and tritonX-100. Not affected by allopurinol. In terms of biological role, in higher plant aldehyde oxidases (AO) appear to be homo- and heterodimeric assemblies of AO subunits with probably different physiological functions. In vitro, AO-gamma uses heptaldehyde, benzaldehyde, naphthaldehyde and cinnamaldehyde as substrates; AO-beta uses indole-3-acetaldehyde (IAAld), indole-3-aldehyde (IAld) and naphtaldehyde; the AAO2-AAO3 dimer uses abscisic aldehyde. This Arabidopsis thaliana (Mouse-ear cress) protein is Indole-3-acetaldehyde oxidase (AAO2).